We begin with the raw amino-acid sequence, 380 residues long: Crotonobetainyl-CoA reductase (380 aa).

Belongs to the acyl-CoA dehydrogenase family. As to quaternary structure, homotetramer. FAD is required as a cofactor.

The protein localises to the cytoplasm. It carries out the reaction 4-(trimethylamino)butanoyl-CoA + oxidized [electron-transfer flavoprotein] + H(+) = crotonobetainyl-CoA + reduced [electron-transfer flavoprotein]. Its pathway is amine and polyamine metabolism; carnitine metabolism. Its function is as follows. Catalyzes the reduction of crotonobetainyl-CoA to gamma-butyrobetainyl-CoA. This is Crotonobetainyl-CoA reductase from Salmonella arizonae (strain ATCC BAA-731 / CDC346-86 / RSK2980).